Reading from the N-terminus, the 217-residue chain is 3,4-dihydroxy-2-butanone 4-phosphate synthase (217 aa).

Residues 37-38, Asp-42, 150-154, and Glu-174 each bind D-ribulose 5-phosphate; these read RE and RRGHT. Residue Glu-38 coordinates Mg(2+). His-153 provides a ligand contact to Mg(2+).

The protein belongs to the DHBP synthase family. In terms of assembly, homodimer. Requires Mg(2+) as cofactor. The cofactor is Mn(2+).

It catalyses the reaction D-ribulose 5-phosphate = (2S)-2-hydroxy-3-oxobutyl phosphate + formate + H(+). It participates in cofactor biosynthesis; riboflavin biosynthesis; 2-hydroxy-3-oxobutyl phosphate from D-ribulose 5-phosphate: step 1/1. Catalyzes the conversion of D-ribulose 5-phosphate to formate and 3,4-dihydroxy-2-butanone 4-phosphate. The chain is 3,4-dihydroxy-2-butanone 4-phosphate synthase from Tolumonas auensis (strain DSM 9187 / NBRC 110442 / TA 4).